A 245-amino-acid polypeptide reads, in one-letter code: tRNA (guanine-N(1)-)-methyltransferase (245 aa).

S-adenosyl-L-methionine-binding positions include Gly-111 and 130–135 (IGDYVL).

Belongs to the RNA methyltransferase TrmD family. In terms of assembly, homodimer.

The protein resides in the cytoplasm. The enzyme catalyses guanosine(37) in tRNA + S-adenosyl-L-methionine = N(1)-methylguanosine(37) in tRNA + S-adenosyl-L-homocysteine + H(+). Functionally, specifically methylates guanosine-37 in various tRNAs. The sequence is that of tRNA (guanine-N(1)-)-methyltransferase from Dictyoglomus turgidum (strain DSM 6724 / Z-1310).